Here is a 419-residue protein sequence, read N- to C-terminus: Ribosome biogenesis protein WDR12 homolog (419 aa).

Residues 10-91 (VQVHLKTKQE…EDAIDIEYVE (82 aa)) form a ubiquitin-like (UBL) domain region. WD repeat units follow at residues 103 to 140 (LHDD…KLTI), 142 to 184 (GHTA…NAVE), 191 to 230 (GHER…TSEG), 249 to 287 (GHRE…IKTE), 289 to 328 (STNK…GSVV), 334 to 374 (GHNA…APLY), and 378 to 416 (GHGE…IENM).

The protein belongs to the WD repeat WDR12/YTM1 family.

The protein localises to the nucleus. The protein resides in the nucleolus. It is found in the nucleoplasm. Functionally, required for maturation of ribosomal RNAs and formation of the large ribosomal subunit. This chain is Ribosome biogenesis protein WDR12 homolog, found in Drosophila virilis (Fruit fly).